We begin with the raw amino-acid sequence, 162 residues long: RxLR effector protein PITG_06094 (162 aa).

Positions 1–20 (MRLSFILAATLTGLLACATA) are cleaved as a signal peptide. The RxLR-dEER motif lies at 51 to 91 (RFLRAYNDAEDDSEDPKNVKNTVDAKPADESEDSELSEEER). Residues 56-88 (YNDAEDDSEDPKNVKNTVDAKPADESEDSELSE) are disordered.

Belongs to the RxLR effector family.

It is found in the secreted. Its subcellular location is the host cytoplasm. It localises to the host nucleus. The protein localises to the host nucleolus. In terms of biological role, effector that enhances P.infestans colonization of Nicotiana benthamiana leaves. The sequence is that of RxLR effector protein PITG_06094 from Phytophthora infestans (strain T30-4) (Potato late blight agent).